Reading from the N-terminus, the 164-residue chain is MLELDLQIATEAPAPTEAEFRQWCELALRQRTADSEMTIRLVDEDEGRELNHTWRHKDYATNVLSFPAEVPDEFLDIPLLGDLVICVAVVEREATEQGKELKAHWAHLVIHGCLHLLGYDHIDDEEAEEMEALERELLAELGYPDPYADDETETSPTVTTKDSE.

Zn(2+) is bound by residues histidine 111, histidine 115, and histidine 121. Residues 142-164 are disordered; sequence GYPDPYADDETETSPTVTTKDSE. Polar residues predominate over residues 154–164; the sequence is TSPTVTTKDSE.

It belongs to the endoribonuclease YbeY family. It depends on Zn(2+) as a cofactor.

The protein resides in the cytoplasm. Its function is as follows. Single strand-specific metallo-endoribonuclease involved in late-stage 70S ribosome quality control and in maturation of the 3' terminus of the 16S rRNA. The protein is Endoribonuclease YbeY of Pseudomonas fluorescens (strain Pf0-1).